Here is a 184-residue protein sequence, read N- to C-terminus: ATP synthase subunit b, chloroplastic (184 aa).

The chain crosses the membrane as a helical span at residues 27–49 (LATNPINLSVVLGVLIFFGKGVL).

Belongs to the ATPase B chain family. F-type ATPases have 2 components, F(1) - the catalytic core - and F(0) - the membrane proton channel. F(1) has five subunits: alpha(3), beta(3), gamma(1), delta(1), epsilon(1). F(0) has four main subunits: a(1), b(1), b'(1) and c(10-14). The alpha and beta chains form an alternating ring which encloses part of the gamma chain. F(1) is attached to F(0) by a central stalk formed by the gamma and epsilon chains, while a peripheral stalk is formed by the delta, b and b' chains.

The protein localises to the plastid. It localises to the chloroplast thylakoid membrane. In terms of biological role, f(1)F(0) ATP synthase produces ATP from ADP in the presence of a proton or sodium gradient. F-type ATPases consist of two structural domains, F(1) containing the extramembraneous catalytic core and F(0) containing the membrane proton channel, linked together by a central stalk and a peripheral stalk. During catalysis, ATP synthesis in the catalytic domain of F(1) is coupled via a rotary mechanism of the central stalk subunits to proton translocation. Functionally, component of the F(0) channel, it forms part of the peripheral stalk, linking F(1) to F(0). The chain is ATP synthase subunit b, chloroplastic from Phalaenopsis aphrodite subsp. formosana (Moth orchid).